Consider the following 173-residue polypeptide: NADH-ubiquinone oxidoreductase chain 6 (173 aa).

The next 5 membrane-spanning stretches (helical) occupy residues 1–21, 27–47, 53–73, 86–106, and 139–159; these read MTYIVSLFLLGLVLGLVAVAS, FAALGLVVAAGVGCGVLVGYG, LVLFLIYLGGMLVVFAYSAAL, SVLGYVVVYTVGVMLVAGWFW, and YGGGMLIVCAWVLLLTLFVVL.

It belongs to the complex I subunit 6 family.

The protein resides in the mitochondrion membrane. The enzyme catalyses a ubiquinone + NADH + 5 H(+)(in) = a ubiquinol + NAD(+) + 4 H(+)(out). In terms of biological role, core subunit of the mitochondrial membrane respiratory chain NADH dehydrogenase (Complex I) that is believed to belong to the minimal assembly required for catalysis. Complex I functions in the transfer of electrons from NADH to the respiratory chain. The immediate electron acceptor for the enzyme is believed to be ubiquinone. This is NADH-ubiquinone oxidoreductase chain 6 (MT-ND6) from Salmo salar (Atlantic salmon).